We begin with the raw amino-acid sequence, 380 residues long: Cytochrome b (380 aa).

4 helical membrane-spanning segments follow: residues 34-54 (FGSL…LLAM), 78-99 (WLIR…YLHI), 114-134 (WNTG…GYVL), and 179-199 (FFAL…IHLT). His84 and His98 together coordinate heme b. The heme b site is built by His183 and His197. His202 is a binding site for a ubiquinone. The next 4 membrane-spanning stretches (helical) occupy residues 227 to 247 (IKDI…ALFS), 289 to 309 (LGGV…PFLH), 321 to 341 (FSQL…WVGS), and 348 to 368 (FIII…ILFP).

The protein belongs to the cytochrome b family. In terms of assembly, the cytochrome bc1 complex contains 11 subunits: 3 respiratory subunits (MT-CYB, CYC1 and UQCRFS1), 2 core proteins (UQCRC1 and UQCRC2) and 6 low-molecular weight proteins (UQCRH/QCR6, UQCRB/QCR7, UQCRQ/QCR8, UQCR10/QCR9, UQCR11/QCR10 and a cleavage product of UQCRFS1). This cytochrome bc1 complex then forms a dimer. The cofactor is heme b.

It localises to the mitochondrion inner membrane. Functionally, component of the ubiquinol-cytochrome c reductase complex (complex III or cytochrome b-c1 complex) that is part of the mitochondrial respiratory chain. The b-c1 complex mediates electron transfer from ubiquinol to cytochrome c. Contributes to the generation of a proton gradient across the mitochondrial membrane that is then used for ATP synthesis. The protein is Cytochrome b (MT-CYB) of Numida meleagris (Helmeted guineafowl).